The sequence spans 292 residues: Zinc finger protein OZF (292 aa).

10 consecutive C2H2-type zinc fingers follow at residues 16 to 38 (FACKVCGKVFSHKSNLTEHEHFH), 44 to 66 (FECNECGKAFSQKQYVIKHQNTH), 72 to 94 (FECNECGKSFSQKENLLTHQKIH), 100 to 122 (FECKDCGKAFIQKSNLIRHQRTH), 128 to 150 (FVCKECGKTFSGKSNLTEHEKIH), 156 to 178 (FKCSECGTAFGQKKYLIKHQNIH), 184 to 206 (YECNECGKAFSQRTSLIVHVRIH), 212 to 234 (YECNVCGKAFSQSSSLTVHVRSH), 240 to 262 (YGCNECGKAFSQFSTLALHLRIH), and 268 to 290 (YQCSECGKAFSQKSHHIRHQKIH). Glycyl lysine isopeptide (Lys-Gly) (interchain with G-Cter in SUMO2) cross-links involve residues Lys-28, Lys-51, and Lys-56. Residues Lys-157 and Lys-169 each participate in a glycyl lysine isopeptide (Lys-Gly) (interchain with G-Cter in SUMO) cross-link. Lys-173 is covalently cross-linked (Glycyl lysine isopeptide (Lys-Gly) (interchain with G-Cter in SUMO2)). The interval 212–292 (YECNVCGKAF…HIRHQKIHTH (81 aa)) is interaction with TERF2IP.

This sequence belongs to the krueppel C2H2-type zinc-finger protein family. Binds DNA. Interacts with SUMO conjugating enzyme UBC9/UBE2I. Interacts with the telomeric protein TERF2IP. Sumoylated. As to expression, liver, skeletal and heart muscle, mammary cells. Very low levels in brain, lung, placenta and kidney. Strongly overexpressed in many pancreas and colorectal cancers. Increased gene copy numbers are detected in 3 of 12 tumor cell lines and 2 of 12 primary pancreatic carcinomas. Overexpressed in 80% of colorectal cancers.

The protein resides in the nucleus. The chain is Zinc finger protein OZF (ZNF146) from Homo sapiens (Human).